Consider the following 259-residue polypeptide: 7alpha-hydroxysteroid dehydrogenase (259 aa).

Residues Ile-18, 37–38 (DY), and Asn-90 contribute to the NAD(+) site. Positions 145 and 158 each coordinate glycochenodeoxycholate. Residues Tyr-158, Lys-162, and 191–193 (ILT) contribute to the NAD(+) site. Tyr-158 functions as the Proton acceptor in the catalytic mechanism.

Belongs to the short-chain dehydrogenases/reductases (SDR) family. Homotetramer.

The catalysed reaction is cholate + NAD(+) = 3alpha,12alpha-dihydroxy-7-oxo-5beta-cholanate + NADH + H(+). The enzyme catalyses chenodeoxycholate + NAD(+) = 7-oxolithocholate + NADH + H(+). It catalyses the reaction taurochenodeoxycholate + NAD(+) = 7-oxotaurolithocholate + NADH + H(+). It carries out the reaction glycochenodeoxycholate + NAD(+) = 7-oxoglycolithocholate + NADH + H(+). The catalysed reaction is taurocholate + NAD(+) = 7-oxo-taurodeoxycholate + NADH + H(+). The enzyme catalyses glycocholate + NAD(+) = 7-oxo-glycodeoxycholate + NADH + H(+). It catalyses the reaction an aromatic primary alcohol + NAD(+) = an aromatic aldehyde + NADH + H(+). It carries out the reaction benzyl alcohol + NAD(+) = benzaldehyde + NADH + H(+). The catalysed reaction is 4-cyanobenzyl alcohol + NAD(+) = 4-cyanobenzaldehyde + NADH + H(+). The enzyme catalyses 4-acetoxybenzyl alcohol + NAD(+) = 4-acetoxybenzaldehyde + NADH + H(+). It catalyses the reaction 4-(trifluoromethyl)benzyl alcohol + NAD(+) = 4-(trifluoromethyl)benzaldehyde + NADH + H(+). In terms of biological role, 7alpha-hydroxysteroid dehydrogenase involved in the metabolism of bile acids in the gut. Catalyzes the NAD(+)-dependent oxidation of the 7alpha-hydroxy group of 7alpha-hydroxysteroids, such as cholate, chenodeoxycholate, taurochenodeoxycholate, glycochenodeoxycholate, taurocholate and glycocholate, to the corresponding 7-oxosteroids. Since it is also able to catalyze the reduction of nonsteroidal carbonyl compounds such as various benzaldehyde analogs to their corresponding benzyl alcohols, this enzyme may also function in the detoxification of xenobiotics containing carbonyl groups in the large intestine. The sequence is that of 7alpha-hydroxysteroid dehydrogenase from Bacteroides fragilis (strain ATCC 25285 / DSM 2151 / CCUG 4856 / JCM 11019 / LMG 10263 / NCTC 9343 / Onslow / VPI 2553 / EN-2).